A 423-amino-acid chain; its full sequence is MTNLKNLRGMLDLLPAQSQGWQKVESIALEHFSRAGLQEIRTPILEQTELFSRGIGENTDVVGKEMYSFDDRGGRSCTLRPEGTAPVARSIIQHGLLNNGPQRLWYRGPMFRYERPQAGRQRQFHQIGVEFVGLASVMSDAEVISIAWNFLKDVGLNDLTLEINSLGSNEDRNIFKEELKDWLNQRFDLLDEDSQKRINVNPLRILDSKNNSTKELLSEAPSLNDFLSSESKTRFDYLQELLVNLKIPYKINYNLVRGLDYYSHTAFEITSDHLGSQATVCGGGRYDGLISELGGPQAPSIGWAIGMERLVILAGDKILQTKSPDVYVIHKGKKAEQLALEITCQLRSSNLIIELDYSGSSFSKQFKRADKSRAKWALVIGEDEVSKGQLLMKKLRDKQKDEESREYIFSKGDLDQLIKKLIA.

The protein belongs to the class-II aminoacyl-tRNA synthetase family. In terms of assembly, homodimer.

It is found in the cytoplasm. It catalyses the reaction tRNA(His) + L-histidine + ATP = L-histidyl-tRNA(His) + AMP + diphosphate + H(+). This chain is Histidine--tRNA ligase, found in Prochlorococcus marinus (strain NATL1A).